The primary structure comprises 423 residues: COP9 signalosome complex subunit 3 (423 aa).

Residues 197-365 enclose the PCI domain; sequence NFERALYFFE…GMVCFHDNPE (169 aa). The tract at residues 402–423 is disordered; it reads QFVQKSMGTQEDDVGSKTSSYS.

This sequence belongs to the CSN3 family. In terms of assembly, component of the CSN complex, probably composed of cops1, cops2, cops3, cops4, cops5, cops6, cops7, cops8 and cops9.

It is found in the cytoplasm. The protein resides in the nucleus. Its function is as follows. Component of the COP9 signalosome complex (CSN), a complex involved in various cellular and developmental processes. The CSN complex is an essential regulator of the ubiquitin (Ubl) conjugation pathway by mediating the deneddylation of the cullin subunits of E3 ligase complexes, leading to modify the Ubl ligase activity. This Danio rerio (Zebrafish) protein is COP9 signalosome complex subunit 3 (cops3).